The sequence spans 199 residues: uncharacterized protein (199 aa).

Positions 1-23 (MSARAPKELRLALPPCLLNRTFA) are cleaved as a signal peptide. N-linked (GlcNAc...) asparagine glycans are attached at residues asparagine 19 and asparagine 26. The Extracellular portion of the chain corresponds to 24–60 (SHNASGGSSAGLRSSGAGGGTCITQVGQQLFQSFSST). The chain crosses the membrane as a helical span at residues 61 to 81 (LVLIVLVTLIFCLLVLSLSTF). Residues 82-199 (HIHKRRMKKR…EGLLQTVVLS (118 aa)) lie on the Cytoplasmic side of the membrane. Residues 93 to 190 (MQRAQEEYER…ASSCLDTPGE (98 aa)) are disordered. 2 stretches are compositionally biased toward basic and acidic residues: residues 95–106 (RAQEEYERDHCS) and 124–135 (HGKETRLERQPR). Positions 147-163 (SSSSSSSSSPGLLCQGP) are enriched in low complexity. Over residues 164 to 176 (CAPPPPLPAPTPQ) the composition is skewed to pro residues.

The protein localises to the membrane. This is an uncharacterized protein from Mus musculus (Mouse).